The following is a 482-amino-acid chain: GDP-D-glucose phosphorylase 1 (482 aa).

Positions 1-21 (MEPFPRILDDRLPRNMRRPRP) are disordered. His255 (tele-GMP-histidine intermediate) is an active-site residue. The tract at residues 461 to 482 (MPRSPSIRHRSSTRAQSDEGSK) is disordered.

Belongs to the GDPGP1 family. In terms of tissue distribution, expressed throughout the neuronal system, in the spermatheca and anterior hypodermal cells.

Its subcellular location is the cytoplasm. The enzyme catalyses GDP-alpha-D-glucose + phosphate = alpha-D-glucose 1-phosphate + GDP + H(+). Functionally, specific and highly efficient GDP-D-glucose phosphorylase regulating the levels of GDP-D-glucose in cells. The protein is GDP-D-glucose phosphorylase 1 of Caenorhabditis elegans.